Reading from the N-terminus, the 303-residue chain is Glutathione transport system permease protein GsiD (303 aa).

6 consecutive transmembrane segments (helical) span residues 40 to 60 (AMTA…ARWI), 105 to 125 (LAAG…LGLL), 144 to 164 (LFAF…GSGI), 165 to 185 (ANVI…LVRG), 222 to 242 (IVVF…SLSF), and 266 to 286 (VIAP…VLAF). Residues 101-290 (AQISLAAGVF…LTVLAFNLLG (190 aa)) form the ABC transmembrane type-1 domain.

It belongs to the binding-protein-dependent transport system permease family. The complex is composed of two ATP-binding proteins (GsiA), two transmembrane proteins (GsiC and GsiD) and a solute-binding protein (GsiB).

It is found in the cell inner membrane. Its function is as follows. Part of the ABC transporter complex GsiABCD involved in glutathione import. Probably responsible for the translocation of the substrate across the membrane. The chain is Glutathione transport system permease protein GsiD from Shigella flexneri serotype 5b (strain 8401).